The primary structure comprises 245 residues: 8-amino-3,8-dideoxy-manno-octulosonate cytidylyltransferase (245 aa).

Belongs to the KdsB family.

Its subcellular location is the cytoplasm. The catalysed reaction is 8-amino-3,8-dideoxy-alpha-D-manno-octulosonate + CTP = CMP-8-amino-3,8-dideoxy-alpha-D-manno-oct-2-ulosonate + diphosphate. It participates in bacterial outer membrane biogenesis; lipopolysaccharide biosynthesis. Activates KDO8N (a required 8-carbon sugar) for incorporation into bacterial lipopolysaccharide in the Shewanella genus. The protein is 8-amino-3,8-dideoxy-manno-octulosonate cytidylyltransferase of Shewanella piezotolerans (strain WP3 / JCM 13877).